Here is a 288-residue protein sequence, read N- to C-terminus: G1/S-specific cyclin-D2 (288 aa).

Positions 26–151 (VLQNLLTIEE…VVLGKLKWNL (126 aa)) constitute a Cyclin N-terminal domain. The disordered stretch occupies residues 264–288 (DQDGSKSEDELDQASTPTDVRDIDL). Ser270 bears the Phosphoserine mark. Position 279 is a phosphothreonine (Thr279).

It belongs to the cyclin family. Cyclin D subfamily. In terms of assembly, interacts with either CDK4 or CDK6 protein kinase to form a serine/threonine kinase holoenzyme complex. The cyclin subunit imparts substrate specificity to the complex. Post-translationally, phosphorylation at Thr-279 by MAP kinases is required for ubiquitination and degradation by the DCX(AMBRA1) complex. Ubiquitinated by the DCX(AMBRA1) complex during the transition from G1 to S cell phase, leading to its degradation: ubiquitination is dependent on Thr-279 phosphorylation. The DCX(AMBRA1) complex represents the major regulator of CCND2 stability during the G1/S transition. Polyubiquitinated by the SCF(FBXL2) complex, leading to proteasomal degradation.

It localises to the nucleus. Its subcellular location is the cytoplasm. It is found in the nucleus membrane. Regulatory component of the cyclin D2-CDK4 (DC) complex that phosphorylates and inhibits members of the retinoblastoma (RB) protein family including RB1 and regulates the cell-cycle during G(1)/S transition. Phosphorylation of RB1 allows dissociation of the transcription factor E2F from the RB/E2F complex and the subsequent transcription of E2F target genes which are responsible for the progression through the G(1) phase. Hypophosphorylates RB1 in early G(1) phase. Cyclin D-CDK4 complexes are major integrators of various mitogenenic and antimitogenic signals. The protein is G1/S-specific cyclin-D2 (CCND2) of Sus scrofa (Pig).